Reading from the N-terminus, the 224-residue chain is Heme response regulator HssR (224 aa).

The 114-residue stretch at Asn-3–Leu-116 folds into the Response regulatory domain. Residue Asp-52 is modified to 4-aspartylphosphate. Positions Asp-124–Gln-222 form a DNA-binding region, ompR/PhoB-type.

In terms of processing, phosphorylated by HssS.

It is found in the cytoplasm. Member of the two-component regulatory system HssS/HssR involved in intracellular heme homeostasis and tempering of staphylococcal virulence. Phosphorylated HssR binds to a direct repeat sequence within hrtAB promoter and activates the expression of hrtAB, an efflux pump, in response to extracellular heme, hemin, hemoglobin or blood. The chain is Heme response regulator HssR (hssR) from Staphylococcus epidermidis (strain ATCC 35984 / DSM 28319 / BCRC 17069 / CCUG 31568 / BM 3577 / RP62A).